The chain runs to 134 residues: 6,7-dimethyl-8-ribityllumazine synthase (134 aa).

5-amino-6-(D-ribitylamino)uracil contacts are provided by residues Phe12, 44 to 46, and 68 to 70; these read VFD and SVI. Position 73-74 (73-74) interacts with (2S)-2-hydroxy-3-oxobutyl phosphate; that stretch reads ET. Residue His76 is the Proton donor of the active site. Position 101 (Leu101) interacts with 5-amino-6-(D-ribitylamino)uracil. Residue Arg116 participates in (2S)-2-hydroxy-3-oxobutyl phosphate binding.

Belongs to the DMRL synthase family.

It carries out the reaction (2S)-2-hydroxy-3-oxobutyl phosphate + 5-amino-6-(D-ribitylamino)uracil = 6,7-dimethyl-8-(1-D-ribityl)lumazine + phosphate + 2 H2O + H(+). Its pathway is cofactor biosynthesis; riboflavin biosynthesis; riboflavin from 2-hydroxy-3-oxobutyl phosphate and 5-amino-6-(D-ribitylamino)uracil: step 1/2. Its function is as follows. Catalyzes the formation of 6,7-dimethyl-8-ribityllumazine by condensation of 5-amino-6-(D-ribitylamino)uracil with 3,4-dihydroxy-2-butanone 4-phosphate. This is the penultimate step in the biosynthesis of riboflavin. This Methanosarcina mazei (strain ATCC BAA-159 / DSM 3647 / Goe1 / Go1 / JCM 11833 / OCM 88) (Methanosarcina frisia) protein is 6,7-dimethyl-8-ribityllumazine synthase.